The sequence spans 227 residues: Abasic site processing protein YoaM (227 aa).

The Nucleophile role is filled by Cys2. At Cys2 the chain carries Thiazolidine linkage to a ring-opened DNA abasic site. Glu106 is an active-site residue.

Belongs to the SOS response-associated peptidase family.

Formation and reversal of DNA-protein cross-link depends on DNA context. Catalyzes formation of the thiazolidine linkage in presence of abasic sites in single-stranded DNA. Mediates the reversal of the thiazolidine cross-link in presence of double stranded DNA. Sensor of abasic sites in single-stranded DNA (ssDNA) required to preserve genome integrity by promoting error-free repair of abasic sites. Recognizes and binds abasic sites in ssDNA at replication forks and chemically modifies the lesion by forming a covalent cross-link with DNA: forms a stable thiazolidine linkage between a ring-opened abasic site and the alpha-amino and sulfhydryl substituents of its N-terminal catalytic cysteine residue. The DNA-protein cross-link is then reversed: able to catalyze the reversal of the thiazolidine cross-link and cycle between a cross-link and a non-cross-linked state depending on DNA context: mediates self-reversal of the thiazolidine cross-link in double stranded DNA. May act as a protease: mediates autocatalytic processing of its N-terminal methionine in order to expose the catalytic cysteine. The sequence is that of Abasic site processing protein YoaM (yoaM) from Bacillus subtilis (strain 168).